A 202-amino-acid polypeptide reads, in one-letter code: ATP-dependent Clp protease proteolytic subunit (202 aa).

Ser-101 (nucleophile) is an active-site residue. His-126 is an active-site residue.

Belongs to the peptidase S14 family. As to quaternary structure, component of the chloroplastic Clp protease core complex.

The protein localises to the plastid. The protein resides in the chloroplast stroma. The enzyme catalyses Hydrolysis of proteins to small peptides in the presence of ATP and magnesium. alpha-casein is the usual test substrate. In the absence of ATP, only oligopeptides shorter than five residues are hydrolyzed (such as succinyl-Leu-Tyr-|-NHMec, and Leu-Tyr-Leu-|-Tyr-Trp, in which cleavage of the -Tyr-|-Leu- and -Tyr-|-Trp bonds also occurs).. Functionally, cleaves peptides in various proteins in a process that requires ATP hydrolysis. Has a chymotrypsin-like activity. Plays a major role in the degradation of misfolded proteins. The protein is ATP-dependent Clp protease proteolytic subunit of Calycanthus floridus var. glaucus (Eastern sweetshrub).